A 238-amino-acid chain; its full sequence is Pyridoxine 5'-phosphate synthase (238 aa).

Residue Asn-7 participates in 3-amino-2-oxopropyl phosphate binding. 1-deoxy-D-xylulose 5-phosphate is bound at residue 9–10 (DH). Residue Arg-18 coordinates 3-amino-2-oxopropyl phosphate. His-43 (proton acceptor) is an active-site residue. 1-deoxy-D-xylulose 5-phosphate contacts are provided by Arg-45 and His-50. Glu-70 (proton acceptor) is an active-site residue. Thr-100 provides a ligand contact to 1-deoxy-D-xylulose 5-phosphate. His-190 (proton donor) is an active-site residue. 3-amino-2-oxopropyl phosphate is bound by residues Gly-191 and 212–213 (GH).

It belongs to the PNP synthase family. Homooctamer; tetramer of dimers.

It localises to the cytoplasm. It catalyses the reaction 3-amino-2-oxopropyl phosphate + 1-deoxy-D-xylulose 5-phosphate = pyridoxine 5'-phosphate + phosphate + 2 H2O + H(+). The protein operates within cofactor biosynthesis; pyridoxine 5'-phosphate biosynthesis; pyridoxine 5'-phosphate from D-erythrose 4-phosphate: step 5/5. Catalyzes the complicated ring closure reaction between the two acyclic compounds 1-deoxy-D-xylulose-5-phosphate (DXP) and 3-amino-2-oxopropyl phosphate (1-amino-acetone-3-phosphate or AAP) to form pyridoxine 5'-phosphate (PNP) and inorganic phosphate. The chain is Pyridoxine 5'-phosphate synthase from Prochlorococcus marinus (strain MIT 9515).